A 51-amino-acid chain; its full sequence is Large ribosomal subunit protein eL39 (51 aa).

This sequence belongs to the eukaryotic ribosomal protein eL39 family.

In Aeropyrum pernix (strain ATCC 700893 / DSM 11879 / JCM 9820 / NBRC 100138 / K1), this protein is Large ribosomal subunit protein eL39 (rpl39e).